The chain runs to 329 residues: Mitochondrial nuclease (329 aa).

Histidine 138 functions as the Proton acceptor in the catalytic mechanism. Asparagine 170 lines the Mg(2+) pocket.

Belongs to the DNA/RNA non-specific endonuclease family. Homodimer. Mn(2+) serves as cofactor. It depends on Mg(2+) as a cofactor.

Its subcellular location is the mitochondrion inner membrane. In terms of biological role, this enzyme has both RNase and DNase activity. In Saccharomyces cerevisiae (strain ATCC 204508 / S288c) (Baker's yeast), this protein is Mitochondrial nuclease (NUC1).